The following is a 185-amino-acid chain: Pyruvate/ketoisovalerate oxidoreductases common subunit gamma (185 aa).

In terms of assembly, heterotetramer of one alpha, one beta, one delta and one gamma chain.

It catalyses the reaction 2 oxidized [2Fe-2S]-[ferredoxin] + pyruvate + CoA = 2 reduced [2Fe-2S]-[ferredoxin] + acetyl-CoA + CO2 + H(+). The catalysed reaction is 3-methyl-2-oxobutanoate + 2 oxidized [2Fe-2S]-[ferredoxin] + CoA = 2-methylpropanoyl-CoA + 2 reduced [2Fe-2S]-[ferredoxin] + CO2 + H(+). The protein is Pyruvate/ketoisovalerate oxidoreductases common subunit gamma (porG) of Pyrococcus abyssi (strain GE5 / Orsay).